The following is a 76-amino-acid chain: Putative snRNP Sm-like protein (76 aa).

A Sm domain is found at 4-76 (RPLDVIHKSL…VLAISPVEIE (73 aa)).

Belongs to the snRNP Sm proteins family.

The polypeptide is Putative snRNP Sm-like protein (Thermococcus sibiricus (strain DSM 12597 / MM 739)).